The sequence spans 467 residues: DNA polymerase IV (467 aa).

A UmuC domain is found at 5–187; sequence VLHIDMDAFF…LPVGALWGVG (183 aa). Residues D9 and D104 each contribute to the Mg(2+) site. E105 is an active-site residue. Disordered stretches follow at residues 364-383 and 429-449; these read PDTD…STQV and KGRT…DPLD.

It belongs to the DNA polymerase type-Y family. In terms of assembly, monomer. Mg(2+) serves as cofactor.

The protein localises to the cytoplasm. It catalyses the reaction DNA(n) + a 2'-deoxyribonucleoside 5'-triphosphate = DNA(n+1) + diphosphate. Its function is as follows. Poorly processive, error-prone DNA polymerase involved in untargeted mutagenesis. Copies undamaged DNA at stalled replication forks, which arise in vivo from mismatched or misaligned primer ends. These misaligned primers can be extended by PolIV. Exhibits no 3'-5' exonuclease (proofreading) activity. May be involved in translesional synthesis, in conjunction with the beta clamp from PolIII. This is DNA polymerase IV from Corynebacterium glutamicum (strain ATCC 13032 / DSM 20300 / JCM 1318 / BCRC 11384 / CCUG 27702 / LMG 3730 / NBRC 12168 / NCIMB 10025 / NRRL B-2784 / 534).